Reading from the N-terminus, the 538-residue chain is Guanine nucleotide-binding protein-like 3 (538 aa).

Positions 1–45 (MKRPKLKKASKRMTCHKRYKIQKKVREHHRKLRKEAKKRGHKKPK) are enriched in basic residues. A disordered region spans residues 1–125 (MKRPKLKKAS…KAKSGKQNPK (125 aa)). Residues 2 to 46 (KRPKLKKASKRMTCHKRYKIQKKVREHHRKLRKEAKKRGHKKPKK) form a basic region. Positions 54–95 (APFKEALLREAELRKQQLEELKQQQKLDRQKEQERKRKLEIS) form a coiled coil. Residues 59–94 (ALLREAELRKQQLEELKQQQKLDRQKEQERKRKLEI) are compositionally biased toward basic and acidic residues. Lysine 79 is modified (N6-acetyllysine). Residue lysine 91 forms a Glycyl lysine isopeptide (Lys-Gly) (interchain with G-Cter in SUMO2) linkage. Residues serine 95 and serine 101 each carry the phosphoserine modification. Residues 95 to 110 (SPDDEQSNVETQEESD) are compositionally biased toward acidic residues. Basic residues predominate over residues 115-125 (KKAKSGKQNPK). One can recognise a CP-type G domain in the interval 129-307 (CQELKKVIEA…IIDSPCFIIS (179 aa)). 176 to 179 (NKSD) contacts GTP. Residues lysine 177, lysine 248, lysine 262, and lysine 270 each participate in a glycyl lysine isopeptide (Lys-Gly) (interchain with G-Cter in SUMO2) cross-link. 256–263 (GFPNVGKS) is a binding site for GTP. The intermediate stretch occupies residues 277 to 451 (VGVSMGLTRS…HLTNKILFRS (175 aa)). 300–303 (DSPC) is a GTP binding site. Composition is skewed to basic and acidic residues over residues 460 to 473 (EEKD…KQTE) and 481 to 491 (QEHVTGEKNAE). Positions 460–532 (EEKDIPEESP…KMSEEDDAYD (73 aa)) are acidic. The tract at residues 460–538 (EEKDIPEESP…DAYDFTTDYI (79 aa)) is disordered. A phosphoserine mark is found at serine 493, serine 505, and serine 518. A compositionally biased stretch (basic and acidic residues) spans 514-524 (PSDRSFILDKM).

This sequence belongs to the TRAFAC class YlqF/YawG GTPase family. In terms of assembly, interacts with MDM2; this interaction stabilizes MDM2. Interaction with MDM2 occurs in the nucleoplasm and is triggered by a nucleolar release mechanism, such as mitosis-induced nucleolar disassembly. May interact with p53/TP53 via its basic domain. This interaction is most probably indirect and mediated by MDM2-binding. In terms of tissue distribution, expressed in testis.

Its subcellular location is the nucleus. The protein localises to the nucleolus. May be required to maintain the proliferative capacity of stem cells. Stabilizes MDM2 by preventing its ubiquitination, and hence proteasomal degradation. This Rattus norvegicus (Rat) protein is Guanine nucleotide-binding protein-like 3 (Gnl3).